Consider the following 311-residue polypeptide: Aspartate carbamoyltransferase catalytic subunit (311 aa).

Residues R55 and T56 each contribute to the carbamoyl phosphate site. Residue K85 coordinates L-aspartate. Carbamoyl phosphate contacts are provided by R106, H135, and Q138. Residues R168 and R230 each coordinate L-aspartate. Carbamoyl phosphate is bound by residues L268 and P269.

This sequence belongs to the aspartate/ornithine carbamoyltransferase superfamily. ATCase family. In terms of assembly, heterododecamer (2C3:3R2) of six catalytic PyrB chains organized as two trimers (C3), and six regulatory PyrI chains organized as three dimers (R2).

It carries out the reaction carbamoyl phosphate + L-aspartate = N-carbamoyl-L-aspartate + phosphate + H(+). It participates in pyrimidine metabolism; UMP biosynthesis via de novo pathway; (S)-dihydroorotate from bicarbonate: step 2/3. Functionally, catalyzes the condensation of carbamoyl phosphate and aspartate to form carbamoyl aspartate and inorganic phosphate, the committed step in the de novo pyrimidine nucleotide biosynthesis pathway. This chain is Aspartate carbamoyltransferase catalytic subunit, found in Pectobacterium atrosepticum (strain SCRI 1043 / ATCC BAA-672) (Erwinia carotovora subsp. atroseptica).